The primary structure comprises 173 residues: Mediator of RNA polymerase II transcription subunit 19 (173 aa).

The interval 139 to 173 (LMRGDDMSENDEFGARRSKRKKKAQNGTDSKRQHI) is disordered.

It belongs to the Mediator complex subunit 19 family. Component of the Mediator complex.

Its subcellular location is the nucleus. Functionally, component of the Mediator complex, a coactivator involved in the regulated transcription of nearly all RNA polymerase II-dependent genes. Mediator functions as a bridge to convey information from gene-specific regulatory proteins to the basal RNA polymerase II transcription machinery. Mediator is recruited to promoters by direct interactions with regulatory proteins and serves as a scaffold for the assembly of a functional preinitiation complex with RNA polymerase II and the general transcription factors. This is Mediator of RNA polymerase II transcription subunit 19 (ROX3) from Scheffersomyces stipitis (strain ATCC 58785 / CBS 6054 / NBRC 10063 / NRRL Y-11545) (Yeast).